The following is a 59-amino-acid chain: Large ribosomal subunit protein bL32 (59 aa).

The segment at 1 to 23 (MAVQQNKKSPSKRGMHRSHDFLT) is disordered.

This sequence belongs to the bacterial ribosomal protein bL32 family.

This Burkholderia multivorans (strain ATCC 17616 / 249) protein is Large ribosomal subunit protein bL32.